The following is a 303-amino-acid chain: Haloalkane dehalogenase (303 aa).

An AB hydrolase-1 domain is found at proline 48–valine 192. The active-site Nucleophile is the aspartate 123. The active-site Proton donor is aspartate 250. Histidine 280 functions as the Proton acceptor in the catalytic mechanism.

The protein belongs to the haloalkane dehalogenase family. Type 1 subfamily. Monomer.

The catalysed reaction is 1-haloalkane + H2O = a halide anion + a primary alcohol + H(+). Functionally, catalyzes hydrolytic cleavage of carbon-halogen bonds in halogenated aliphatic compounds, leading to the formation of the corresponding primary alcohols, halide ions and protons. The polypeptide is Haloalkane dehalogenase (Psychrobacter cryohalolentis (strain ATCC BAA-1226 / DSM 17306 / VKM B-2378 / K5)).